Here is a 143-residue protein sequence, read N- to C-terminus: Transcription antitermination protein NusB (143 aa).

The protein belongs to the NusB family.

Its function is as follows. Involved in transcription antitermination. Required for transcription of ribosomal RNA (rRNA) genes. Binds specifically to the boxA antiterminator sequence of the ribosomal RNA (rrn) operons. In Methylacidiphilum infernorum (isolate V4) (Methylokorus infernorum (strain V4)), this protein is Transcription antitermination protein NusB.